The sequence spans 121 residues: UPF0102 protein BVU_1879 (121 aa).

The protein belongs to the UPF0102 family.

The sequence is that of UPF0102 protein BVU_1879 from Phocaeicola vulgatus (strain ATCC 8482 / DSM 1447 / JCM 5826 / CCUG 4940 / NBRC 14291 / NCTC 11154) (Bacteroides vulgatus).